A 264-amino-acid polypeptide reads, in one-letter code: S-adenosylmethionine decarboxylase proenzyme (264 aa).

Ser-113 (schiff-base intermediate with substrate; via pyruvic acid) is an active-site residue. Position 113 is a pyruvic acid (Ser); by autocatalysis (Ser-113). His-118 serves as the catalytic Proton acceptor; for processing activity. Cys-141 functions as the Proton donor; for catalytic activity in the catalytic mechanism.

It belongs to the prokaryotic AdoMetDC family. Type 2 subfamily. Heterooctamer of four alpha and four beta chains arranged as a tetramer of alpha/beta heterodimers. It depends on pyruvate as a cofactor. In terms of processing, is synthesized initially as an inactive proenzyme. Formation of the active enzyme involves a self-maturation process in which the active site pyruvoyl group is generated from an internal serine residue via an autocatalytic post-translational modification. Two non-identical subunits are generated from the proenzyme in this reaction, and the pyruvate is formed at the N-terminus of the alpha chain, which is derived from the carboxyl end of the proenzyme. The post-translation cleavage follows an unusual pathway, termed non-hydrolytic serinolysis, in which the side chain hydroxyl group of the serine supplies its oxygen atom to form the C-terminus of the beta chain, while the remainder of the serine residue undergoes an oxidative deamination to produce ammonia and the pyruvoyl group blocking the N-terminus of the alpha chain.

The enzyme catalyses S-adenosyl-L-methionine + H(+) = S-adenosyl 3-(methylsulfanyl)propylamine + CO2. It functions in the pathway amine and polyamine biosynthesis; S-adenosylmethioninamine biosynthesis; S-adenosylmethioninamine from S-adenosyl-L-methionine: step 1/1. Catalyzes the decarboxylation of S-adenosylmethionine to S-adenosylmethioninamine (dcAdoMet), the propylamine donor required for the synthesis of the polyamines spermine and spermidine from the diamine putrescine. This Stenotrophomonas maltophilia (strain R551-3) protein is S-adenosylmethionine decarboxylase proenzyme.